Reading from the N-terminus, the 1178-residue chain is DNA-directed RNA polymerase subunit beta' (1178 aa).

Cys60, Cys62, Cys75, and Cys78 together coordinate Zn(2+). Asp450, Asp452, and Asp454 together coordinate Mg(2+). Zn(2+) contacts are provided by Cys795, Cys869, Cys876, and Cys879.

Belongs to the RNA polymerase beta' chain family. As to quaternary structure, the RNAP catalytic core consists of 2 alpha, 1 beta, 1 beta' and 1 omega subunit. When a sigma factor is associated with the core the holoenzyme is formed, which can initiate transcription. It depends on Mg(2+) as a cofactor. The cofactor is Zn(2+).

It catalyses the reaction RNA(n) + a ribonucleoside 5'-triphosphate = RNA(n+1) + diphosphate. In terms of biological role, DNA-dependent RNA polymerase catalyzes the transcription of DNA into RNA using the four ribonucleoside triphosphates as substrates. This chain is DNA-directed RNA polymerase subunit beta', found in Clostridium botulinum (strain Okra / Type B1).